Reading from the N-terminus, the 210-residue chain is Small ribosomal subunit protein uS3 (210 aa).

Positions Ile38–Arg106 constitute a KH type-2 domain.

It belongs to the universal ribosomal protein uS3 family. In terms of assembly, part of the 30S ribosomal subunit. Forms a tight complex with proteins S10 and S14.

Its function is as follows. Binds the lower part of the 30S subunit head. Binds mRNA in the 70S ribosome, positioning it for translation. The polypeptide is Small ribosomal subunit protein uS3 (Trichlorobacter lovleyi (strain ATCC BAA-1151 / DSM 17278 / SZ) (Geobacter lovleyi)).